A 121-amino-acid chain; its full sequence is Ribonuclease P protein component (121 aa).

It belongs to the RnpA family. Consists of a catalytic RNA component (M1 or rnpB) and a protein subunit.

The catalysed reaction is Endonucleolytic cleavage of RNA, removing 5'-extranucleotides from tRNA precursor.. Functionally, RNaseP catalyzes the removal of the 5'-leader sequence from pre-tRNA to produce the mature 5'-terminus. It can also cleave other RNA substrates such as 4.5S RNA. The protein component plays an auxiliary but essential role in vivo by binding to the 5'-leader sequence and broadening the substrate specificity of the ribozyme. In Chromobacterium violaceum (strain ATCC 12472 / DSM 30191 / JCM 1249 / CCUG 213 / NBRC 12614 / NCIMB 9131 / NCTC 9757 / MK), this protein is Ribonuclease P protein component.